The primary structure comprises 648 residues: Golgin subfamily A member 8G (648 aa).

A compositionally biased stretch (pro residues) spans 1–11; it reads MWPQARLPPHP. 2 disordered regions span residues 1-84 and 119-139; these read MWPQ…SATL and NKQVEHQLEEEKKANNEKQKA. The span at 50–62 shows a compositional bias: polar residues; it reads TNGSIHETATSGG. Coiled-coil stretches lie at residues 105–160, 223–275, and 318–424; these read VSQL…LNTD, LEQS…MSQE, and EVEL…QQKQ. Positions 121–139 are enriched in basic and acidic residues; that stretch reads QVEHQLEEEKKANNEKQKA. Disordered stretches follow at residues 356–376, 434–461, 508–549, and 600–624; these read LREQEERLQEQQERLPEQEER, ALPGEGDGGGHLDSEGEEAPRPIPSIPQ, PITK…GVAA, and PVQGEAREGSPHDNPTAQPIVQDHQ. Residues 441-453 show a composition bias toward basic and acidic residues; it reads GGGHLDSEGEEAP. A compositionally biased stretch (gly residues) spans 521 to 534; sequence PGGGHHQAGPGQGG.

Belongs to the GOLGA8 family.

In Homo sapiens (Human), this protein is Golgin subfamily A member 8G.